Reading from the N-terminus, the 147-residue chain is Hemoglobin subunit delta (147 aa).

The region spanning 3–147 is the Globin domain; it reads HLTPEEKAAV…VATALAHKYH (145 aa). Positions 64 and 93 each coordinate heme b.

It belongs to the globin family. In terms of assembly, heterotetramer of two delta chains and two alpha chains. Red blood cells.

This is Hemoglobin subunit delta (HBD) from Ateles geoffroyi (Black-handed spider monkey).